We begin with the raw amino-acid sequence, 354 residues long: Peptide chain release factor 1 (354 aa).

An N5-methylglutamine modification is found at Gln-231. The span at 284 to 304 (EALAKDRKEQVGSGDRSERIR) shows a compositional bias: basic and acidic residues. A disordered region spans residues 284–308 (EALAKDRKEQVGSGDRSERIRTYNF).

It belongs to the prokaryotic/mitochondrial release factor family. Methylated by PrmC. Methylation increases the termination efficiency of RF1.

It localises to the cytoplasm. Its function is as follows. Peptide chain release factor 1 directs the termination of translation in response to the peptide chain termination codons UAG and UAA. This Nitratiruptor sp. (strain SB155-2) protein is Peptide chain release factor 1.